The following is a 226-amino-acid chain: Membrane protein (226 aa).

The Virion surface portion of the chain corresponds to 1–11 (MSNGSIPVDEV). Residues 12 to 32 (IEHLRNWNFTWNIILTILLVV) traverse the membrane as a helical segment. At 33-41 (LQYGHYKYS) the chain is on the intravirion side. Residues 42–62 (VFLYGVKMAILWILWPLVLAL) form a helical membrane-spanning segment. Over 63–75 (SLFDAWASFQVNW) the chain is Virion surface. A helical transmembrane segment spans residues 76–96 (VFFAFSILMACITLMLWIMYF). The Intravirion segment spans residues 97–226 (VNSIRLWRRT…TDSEKVPHLV (130 aa)). The interval 200 to 216 (RSKHGDYSAVSNPSAVL) is interaction with N protein.

Belongs to the alphacoronaviruses M protein family. In terms of assembly, homomultimer. Interacts with envelope E protein in the budding compartment of the host cell, which is located between endoplasmic reticulum and the Golgi complex. Forms a complex with HE and S proteins. Interacts with nucleocapsid N protein. This interaction probably participates in RNA packaging into the virus.

The protein localises to the virion membrane. Its subcellular location is the host Golgi apparatus membrane. Functionally, component of the viral envelope that plays a central role in virus morphogenesis and assembly via its interactions with other viral proteins. The protein is Membrane protein of Sus scrofa (Pig).